Reading from the N-terminus, the 127-residue chain is Large ribosomal subunit protein bL17 (127 aa).

The protein belongs to the bacterial ribosomal protein bL17 family. As to quaternary structure, part of the 50S ribosomal subunit. Contacts protein L32.

This Chromohalobacter salexigens (strain ATCC BAA-138 / DSM 3043 / CIP 106854 / NCIMB 13768 / 1H11) protein is Large ribosomal subunit protein bL17.